The chain runs to 229 residues: Lipoprotein-releasing system ATP-binding protein LolD (229 aa).

Positions Leu-7–Asn-229 constitute an ABC transporter domain. Gly-43–Ser-50 provides a ligand contact to ATP.

It belongs to the ABC transporter superfamily. Lipoprotein translocase (TC 3.A.1.125) family. The complex is composed of two ATP-binding proteins (LolD) and two transmembrane proteins (LolC and LolE).

The protein resides in the cell inner membrane. In terms of biological role, part of the ABC transporter complex LolCDE involved in the translocation of mature outer membrane-directed lipoproteins, from the inner membrane to the periplasmic chaperone, LolA. Responsible for the formation of the LolA-lipoprotein complex in an ATP-dependent manner. This is Lipoprotein-releasing system ATP-binding protein LolD from Buchnera aphidicola subsp. Schizaphis graminum (strain Sg).